The primary structure comprises 245 residues: Adapter protein MecA (245 aa).

The protein belongs to the MecA family. In terms of assembly, homodimer.

Its function is as follows. Enables the recognition and targeting of unfolded and aggregated proteins to the ClpC protease or to other proteins involved in proteolysis. This is Adapter protein MecA from Streptococcus pneumoniae (strain Hungary19A-6).